The primary structure comprises 424 residues: Glutamate-1-semialdehyde 2,1-aminomutase (424 aa).

Lys268 is modified (N6-(pyridoxal phosphate)lysine).

The protein belongs to the class-III pyridoxal-phosphate-dependent aminotransferase family. HemL subfamily. It depends on pyridoxal 5'-phosphate as a cofactor.

The protein localises to the cytoplasm. The enzyme catalyses (S)-4-amino-5-oxopentanoate = 5-aminolevulinate. It participates in porphyrin-containing compound metabolism; protoporphyrin-IX biosynthesis; 5-aminolevulinate from L-glutamyl-tRNA(Glu): step 2/2. This is Glutamate-1-semialdehyde 2,1-aminomutase from Methanosarcina acetivorans (strain ATCC 35395 / DSM 2834 / JCM 12185 / C2A).